The sequence spans 264 residues: Tryptophan synthase alpha chain (264 aa).

Active-site proton acceptor residues include E49 and D60.

This sequence belongs to the TrpA family. In terms of assembly, tetramer of two alpha and two beta chains.

The catalysed reaction is (1S,2R)-1-C-(indol-3-yl)glycerol 3-phosphate + L-serine = D-glyceraldehyde 3-phosphate + L-tryptophan + H2O. The protein operates within amino-acid biosynthesis; L-tryptophan biosynthesis; L-tryptophan from chorismate: step 5/5. Functionally, the alpha subunit is responsible for the aldol cleavage of indoleglycerol phosphate to indole and glyceraldehyde 3-phosphate. The polypeptide is Tryptophan synthase alpha chain (Geobacter sulfurreducens (strain ATCC 51573 / DSM 12127 / PCA)).